The primary structure comprises 184 residues: Large ribosomal subunit protein uL18 (184 aa).

This sequence belongs to the universal ribosomal protein uL18 family. Part of the 50S ribosomal subunit. Contacts the 5S and 23S rRNAs.

In terms of biological role, this is one of the proteins that bind and probably mediate the attachment of the 5S RNA into the large ribosomal subunit, where it forms part of the central protuberance. This is Large ribosomal subunit protein uL18 from Haloferax mediterranei (strain ATCC 33500 / DSM 1411 / JCM 8866 / NBRC 14739 / NCIMB 2177 / R-4) (Halobacterium mediterranei).